Reading from the N-terminus, the 237-residue chain is Ribosomal RNA small subunit methyltransferase G (237 aa).

Residues Gly-78, Phe-83, 129 to 130, and Arg-148 contribute to the S-adenosyl-L-methionine site; that span reads AE. The interval 218–237 is disordered; sequence KKETPRKYPRKAGTPNKKPL.

The protein belongs to the methyltransferase superfamily. RNA methyltransferase RsmG family.

It is found in the cytoplasm. Functionally, specifically methylates the N7 position of a guanine in 16S rRNA. The protein is Ribosomal RNA small subunit methyltransferase G of Streptococcus uberis (strain ATCC BAA-854 / 0140J).